The primary structure comprises 883 residues: Probable pre-mRNA-splicing factor ATP-dependent RNA helicase DEAH8 (883 aa).

The Helicase ATP-binding domain occupies 232-395 (LKLIEENQVL…FDSARIYLIP (164 aa)). 245-252 (GETGSGKT) contacts ATP. Positions 342–345 (DEAH) match the DEAH box motif. The Helicase C-terminal domain maps to 416 to 589 (TVIRTVVQIH…SVVLTLKSLG (174 aa)). The segment at 845 to 883 (EDTRPKKTQRRIEEASTSKVDTNKKTRTSKVDTNKKSKR) is disordered.

It belongs to the DEAD box helicase family. DEAH subfamily. PRP2 sub-subfamily. Predominantly expressed in flowers.

The enzyme catalyses ATP + H2O = ADP + phosphate + H(+). Its function is as follows. May be involved in pre-mRNA splicing. The polypeptide is Probable pre-mRNA-splicing factor ATP-dependent RNA helicase DEAH8 (Arabidopsis thaliana (Mouse-ear cress)).